The chain runs to 108 residues: ATP synthase peripheral stalk subunit F6, mitochondrial (108 aa).

The transit peptide at 1–32 (MILQRLFRFSSIIRSAVSVHFRRNIGVTAVAF) directs the protein to the mitochondrion. N6-acetyllysine occurs at positions 41, 46, and 79. An N6-acetyllysine; alternate mark is found at K84, K94, and K99. Residues K84, K94, and K99 each carry the N6-succinyllysine; alternate modification. N6-acetyllysine is present on K105.

This sequence belongs to the eukaryotic ATPase subunit F6 family. In terms of assembly, component of the ATP synthase complex composed at least of ATP5F1A/subunit alpha, ATP5F1B/subunit beta, ATP5MC1/subunit c (homooctomer), MT-ATP6/subunit a, MT-ATP8/subunit 8, ATP5ME/subunit e, ATP5MF/subunit f, ATP5MG/subunit g, ATP5MK/subunit k, ATP5MJ/subunit j, ATP5F1C/subunit gamma, ATP5F1D/subunit delta, ATP5F1E/subunit epsilon, ATP5PF/subunit F6, ATP5PB/subunit b, ATP5PD/subunit d, ATP5PO/subunit OSCP. ATP synthase complex consists of a soluble F(1) head domain (subunits alpha(3) and beta(3)) - the catalytic core - and a membrane F(0) domain - the membrane proton channel (subunits c, a, 8, e, f, g, k and j). These two domains are linked by a central stalk (subunits gamma, delta, and epsilon) rotating inside the F1 region and a stationary peripheral stalk (subunits F6, b, d, and OSCP).

The protein resides in the mitochondrion. It is found in the mitochondrion inner membrane. Functionally, subunit F6, of the mitochondrial membrane ATP synthase complex (F(1)F(0) ATP synthase or Complex V) that produces ATP from ADP in the presence of a proton gradient across the membrane which is generated by electron transport complexes of the respiratory chain. ATP synthase complex consist of a soluble F(1) head domain - the catalytic core - and a membrane F(1) domain - the membrane proton channel. These two domains are linked by a central stalk rotating inside the F(1) region and a stationary peripheral stalk. During catalysis, ATP synthesis in the catalytic domain of F(1) is coupled via a rotary mechanism of the central stalk subunits to proton translocation. In vivo, can only synthesize ATP although its ATP hydrolase activity can be activated artificially in vitro. Part of the complex F(0) domain. Part of the complex F(0) domain and the peripheric stalk, which acts as a stator to hold the catalytic alpha(3)beta(3) subcomplex and subunit a/ATP6 static relative to the rotary elements. This chain is ATP synthase peripheral stalk subunit F6, mitochondrial, found in Macaca fascicularis (Crab-eating macaque).